The primary structure comprises 118 residues: Large ribosomal subunit protein uL22 (118 aa).

It belongs to the universal ribosomal protein uL22 family. Part of the 50S ribosomal subunit.

In terms of biological role, this protein binds specifically to 23S rRNA; its binding is stimulated by other ribosomal proteins, e.g. L4, L17, and L20. It is important during the early stages of 50S assembly. It makes multiple contacts with different domains of the 23S rRNA in the assembled 50S subunit and ribosome. Its function is as follows. The globular domain of the protein is located near the polypeptide exit tunnel on the outside of the subunit, while an extended beta-hairpin is found that lines the wall of the exit tunnel in the center of the 70S ribosome. The polypeptide is Large ribosomal subunit protein uL22 (Treponema denticola (strain ATCC 35405 / DSM 14222 / CIP 103919 / JCM 8153 / KCTC 15104)).